A 798-amino-acid chain; its full sequence is Cold shock domain-containing protein E1 (798 aa).

Position 1 is an N-acetylmethionine (Met-1). The CSD 1 domain occupies 26–87 (ETGVIEKLLT…RTGKPIAVKL (62 aa)). Lys-81 is subject to N6-acetyllysine. Lys-91 participates in a covalent cross-link: Glycyl lysine isopeptide (Lys-Gly) (interchain with G-Cter in SUMO2). Phosphoserine is present on Ser-123. In terms of domain architecture, CSD 2; truncated spans 136-179 (VFYLTYTPEDVEGNVQLETGDKINFVIDNNKHTGAVSARNIMLL). Residues 186-245 (CQGVVCAMKEAFGFIERGDVVKEIFFHYSEFKGDLETLQPGDDVEFTIKDRNGKEVATDV) form the CSD 3 domain. Ser-276 carries the post-translational modification Phosphoserine. The 41-residue stretch at 297 to 337 (LPFGDKDTKSKVTLLEGDHVRFNISTDRRDKLERATNIEVL) folds into the CSD 4; truncated domain. 2 CSD domains span residues 349–410 (EMGV…AIRI) and 447–507 (NKGK…ATCV). A Phosphoserine modification is found at Ser-514. Positions 519 to 579 (LLGYVATLKD…KGNKVSAEKV (61 aa)) constitute a CSD 7 domain. Ser-584 bears the Phosphoserine mark. CSD domains are found at residues 610–670 (PTQT…AYNI) and 674–735 (RRAT…ACNV). The region spanning 748 to 789 (PRPDRLVNRLKNITLDDASAPRLMVLRQPRGPDNSMGFGAER) is the SUZ-C domain. A Phosphothreonine modification is found at Thr-761.

Belongs to the UNR family. In terms of assembly, component of a multi subunit autoregulatory ribonucleoprotein complex (ARC), at least composed of IGF2BP1, PABPC1 and CSDE1. Interacts with STRAP. Part of a complex associated with the FOS mCRD domain and consisting of PABPC1, PAIP1, HNRPD and SYNCRIP. The interaction with PABPC1 is direct and RNA-independent. Interacts with EIF4ENIF1/4E-T.

It is found in the cytoplasm. The protein resides in the stress granule. It localises to the P-body. Functionally, RNA-binding protein involved in translationally coupled mRNA turnover. Implicated with other RNA-binding proteins in the cytoplasmic deadenylation/translational and decay interplay of the FOS mRNA mediated by the major coding-region determinant of instability (mCRD) domain. Required for efficient formation of stress granules. Its function is as follows. (Microbial infection) Required for internal initiation of translation of human rhinovirus RNA. This Homo sapiens (Human) protein is Cold shock domain-containing protein E1.